Consider the following 119-residue polypeptide: Ribosome-binding factor A (119 aa).

Belongs to the RbfA family. Monomer. Binds 30S ribosomal subunits, but not 50S ribosomal subunits or 70S ribosomes.

It is found in the cytoplasm. Functionally, one of several proteins that assist in the late maturation steps of the functional core of the 30S ribosomal subunit. Associates with free 30S ribosomal subunits (but not with 30S subunits that are part of 70S ribosomes or polysomes). Required for efficient processing of 16S rRNA. May interact with the 5'-terminal helix region of 16S rRNA. The chain is Ribosome-binding factor A from Wolinella succinogenes (strain ATCC 29543 / DSM 1740 / CCUG 13145 / JCM 31913 / LMG 7466 / NCTC 11488 / FDC 602W) (Vibrio succinogenes).